The following is a 299-amino-acid chain: Homoserine kinase (299 aa).

84–94 (PISRGLGSSSA) lines the ATP pocket.

It belongs to the GHMP kinase family. Homoserine kinase subfamily.

The protein resides in the cytoplasm. It catalyses the reaction L-homoserine + ATP = O-phospho-L-homoserine + ADP + H(+). It participates in amino-acid biosynthesis; L-threonine biosynthesis; L-threonine from L-aspartate: step 4/5. Catalyzes the ATP-dependent phosphorylation of L-homoserine to L-homoserine phosphate. In Helicobacter hepaticus (strain ATCC 51449 / 3B1), this protein is Homoserine kinase.